The chain runs to 82 residues: Diphthamide biosynthesis protein 3 (82 aa).

The 57-residue stretch at 8–64 folds into the DPH-type MB domain; the sequence is IYDEVEIEDMTYDPALQTYSYPCPCGDKFEIALADLQDGQDIAVCPSCSLMVRVIFE. 4 residues coordinate Fe cation: C30, C32, C52, and C55.

This sequence belongs to the DPH3 family. Component of the 2-(3-amino-3-carboxypropyl)histidine synthase complex composed of dph-1, dph-2, dph-3 and a NADH-dependent reductase, predominantly cbr-1. The cofactor is Fe(2+).

Its subcellular location is the cytoplasm. The protein localises to the nucleus. It catalyses the reaction [3Fe-4S](1+)-[protein] + Fe(2+)-[Dph3] = [3Fe-4S](0)-[protein] + Fe(3+)-[Dph3]. It carries out the reaction 2 [3Fe-4S](0)-[protein] + 2 Fe(2+)-[Dph3] + NADH = 2 [4Fe-4S](1+)-[protein] + 2 [Dph3] + NAD(+) + H(+). It functions in the pathway protein modification; peptidyl-diphthamide biosynthesis. In terms of biological role, required for the first step of diphthamide biosynthesis, a post-translational modification of histidine which occurs in elongation factor 2. Dph-1 and dph-2 transfer a 3-amino-3-carboxypropyl (ACP) group from S-adenosyl-L-methionine (SAM) to a histidine residue, the reaction is assisted by a reduction system comprising dph-3 and a NADH-dependent reductase, predominantly cbr-1. Acts as an electron donor to reduce the Fe-S cluster in dph1-dph2 keeping the [4Fe-4S] clusters in the active and reduced state. Restores iron to dph-1-dph-2 iron-sulfur clusters which have degraded from [4Fe-4S] to [3Fe-4S] by donating an iron atom to reform [4Fe-4S] clusters, in a manner dependent on the presence of elongation factor 2 and SAM. Associates with the elongator complex and is required for tRNA Wobble base modifications mediated by the elongator complex. The elongator complex is required for multiple tRNA modifications, including mcm5U (5-methoxycarbonylmethyl uridine), mcm5s 2U (5-methoxycarbonylmethyl-2-thiouridine), and ncm5U (5-carbamoylmethyl uridine). In Neurospora crassa (strain ATCC 24698 / 74-OR23-1A / CBS 708.71 / DSM 1257 / FGSC 987), this protein is Diphthamide biosynthesis protein 3 (dph-3).